Here is a 136-residue protein sequence, read N- to C-terminus: Ubiquinol-cytochrome c reductase complex assembly factor 4 (136 aa).

A signal peptide spans 1 to 15 (MNSVLCSRAAGAVRA). Topologically, residues 16–80 (LRLVGWASRS…GKPQQRPWWK (65 aa)) are mitochondrial matrix. The segment at 26-58 (LHPPPRGRSPAQPADREEEDDDPNLPIQFSGSK) is disordered. Residues 81 to 97 (VLPLTLTLVALVVWCYQ) form a helical membrane-spanning segment. The Mitochondrial intermembrane segment spans residues 98–136 (REESGMDLWLRQVLEEEDEEEPEGPPEELEAPALYGART). Residues 112-127 (EEEDEEEPEGPPEELE) show a composition bias toward acidic residues. The interval 112–136 (EEEDEEEPEGPPEELEAPALYGART) is disordered.

The protein belongs to the UQCC4 family. As to quaternary structure, forms a complex, named COMB/coordinator of mitochondrial CYTB biogenesis, composed of UQCC1, UQCC2, UQCC4, UQCC5 and UQCC6; stabilizes nascent cytochrome b/MT-CYB and promotes its membrane insertion. Forms a complex, named COMA, composed of UQCC1, UQCC2 and UQCC4; activates MT-CYB translation. Forms a complex, named COMC, composed of UQCC1, UQCC2; UQCC3 and UQCC4; mediates MT-CYB hemylation and association with the first nuclear-encoded complex III subunit UQCRQ. Complexes COMA and COMB are bound to the mitochondrion inner membrane by UQCC4.

The protein resides in the mitochondrion inner membrane. Required for the assembly and stability of the mitochondrial ubiquinol-cytochrome c reductase complex (complex III (CIII) or cytochrome b-c1 complex), a multisubunit transmembrane complex that is part of the mitochondrial electron transport chain (ETC) which drives oxidative phosphorylation. The protein is Ubiquinol-cytochrome c reductase complex assembly factor 4 (Uqcc4) of Mus musculus (Mouse).